Reading from the N-terminus, the 332-residue chain is NADH-quinone oxidoreductase subunit H (332 aa).

9 helical membrane passes run 4 to 24 (FAFF…IFAS), 44 to 64 (IGPD…MIKL), 78 to 98 (FIFA…LAAI), 120 to 140 (VALL…FLGG), 165 to 185 (VGAL…LVDI), 194 to 214 (FSWL…ALFI), 255 to 275 (IAGA…FWII), 279 to 299 (IMMI…RAAF), and 312 to 332 (YLIL…TVLL).

It belongs to the complex I subunit 1 family. As to quaternary structure, NDH-1 is composed of 14 different subunits. Subunits NuoA, H, J, K, L, M, N constitute the membrane sector of the complex.

It is found in the cell inner membrane. It catalyses the reaction a quinone + NADH + 5 H(+)(in) = a quinol + NAD(+) + 4 H(+)(out). In terms of biological role, NDH-1 shuttles electrons from NADH, via FMN and iron-sulfur (Fe-S) centers, to quinones in the respiratory chain. The immediate electron acceptor for the enzyme in this species is believed to be ubiquinone. Couples the redox reaction to proton translocation (for every two electrons transferred, four hydrogen ions are translocated across the cytoplasmic membrane), and thus conserves the redox energy in a proton gradient. This subunit may bind ubiquinone. This is NADH-quinone oxidoreductase subunit H from Campylobacter jejuni subsp. jejuni serotype O:2 (strain ATCC 700819 / NCTC 11168).